The chain runs to 860 residues: Ribosome-releasing factor 2, mitochondrial (860 aa).

In terms of domain architecture, tr-type G spans 45–337; it reads DRTRNIGIIA…AVVNFLPSPL (293 aa). GTP is bound by residues 54-61, 118-122, and 172-175; these read AHIDAGKT, DTPGH, and NKMD.

Belongs to the TRAFAC class translation factor GTPase superfamily. Classic translation factor GTPase family. EF-G/EF-2 subfamily.

It localises to the mitochondrion. Its function is as follows. Mitochondrial GTPase that mediates the disassembly of ribosomes from messenger RNA at the termination of mitochondrial protein biosynthesis. Not involved in the GTP-dependent ribosomal translocation step during translation elongation. The polypeptide is Ribosome-releasing factor 2, mitochondrial (Debaryomyces hansenii (strain ATCC 36239 / CBS 767 / BCRC 21394 / JCM 1990 / NBRC 0083 / IGC 2968) (Yeast)).